We begin with the raw amino-acid sequence, 39 residues long: uncharacterized protein (39 aa).

This is an uncharacterized protein from Treponema pallidum (strain Nichols).